Here is a 324-residue protein sequence, read N- to C-terminus: Putative HTH-type transcriptional regulatory protein UNCMA_15260 (324 aa).

The HTH cro/C1-type domain maps to 132-189 (LRSLREAKNISLGELAMALGVSRRTISKYESGMNATIEAALKLEEILDAPIACPVNMI). A DNA-binding region (H-T-H motif) is located at residues 143–162 (LGELAMALGVSRRTISKYES).

This is Putative HTH-type transcriptional regulatory protein UNCMA_15260 from Methanocella arvoryzae (strain DSM 22066 / NBRC 105507 / MRE50).